The sequence spans 156 residues: Small ribosomal subunit protein uS7 (156 aa).

It belongs to the universal ribosomal protein uS7 family. As to quaternary structure, part of the 30S ribosomal subunit. Contacts proteins S9 and S11.

Its function is as follows. One of the primary rRNA binding proteins, it binds directly to 16S rRNA where it nucleates assembly of the head domain of the 30S subunit. Is located at the subunit interface close to the decoding center, probably blocks exit of the E-site tRNA. The sequence is that of Small ribosomal subunit protein uS7 from Halalkalibacterium halodurans (strain ATCC BAA-125 / DSM 18197 / FERM 7344 / JCM 9153 / C-125) (Bacillus halodurans).